Here is a 672-residue protein sequence, read N- to C-terminus: Cytadherence high molecular weight protein 3 (672 aa).

25 tandem repeats follow at residues tyrosine 98 to glutamine 100, tyrosine 106 to glutamine 108, proline 160 to valine 162, tyrosine 197 to glutamine 199, tyrosine 206 to glutamine 208, tyrosine 211 to glutamine 213, tyrosine 221 to glutamine 223, tyrosine 226 to glutamine 228, tyrosine 235 to glutamine 237, tyrosine 249 to glutamine 251, proline 288 to valine 290, valine 310 to glutamate 319, proline 312 to threonine 315, proline 316 to valine 318, proline 322 to valine 324, valine 330 to glutamate 339, proline 332 to threonine 335, proline 336 to valine 338, proline 354 to proline 358, proline 385 to proline 389, proline 396 to proline 400, proline 402 to valine 404, proline 413 to valine 415, proline 424 to proline 428, and proline 454 to valine 456. The segment at tyrosine 98–glutamine 251 is 9 X 3 AA repeats OF Y-D-Q. The 8 X 3 AA repeats of P-V-V stretch occupies residues proline 160–valine 456. A disordered region spans residues glycine 177 to tyrosine 197. The interval valine 310–glutamate 339 is 2 X 10 AA repeats of V-E-P-T-P-T-P-V-V-E. Residues proline 312–proline 428 are 6 X 5 AA repeats of P-X-P-X-P.

It localises to the cell projection. The protein resides in the attachment organelle membrane. In terms of biological role, component of the cytoskeleton-like structure which stabilizes the shape of the wall-less mycoplasma. This cytoskeleton-like network of accessory proteins containing HMW proteins 1 to 5 allows the proper anchoring of cytadhesin proteins in the mycoplasmal membrane at the attachment organelle. Essential for successful surface parasitism. The chain is Cytadherence high molecular weight protein 3 (hmw3) from Mycoplasma pneumoniae (strain ATCC 29342 / M129 / Subtype 1) (Mycoplasmoides pneumoniae).